We begin with the raw amino-acid sequence, 262 residues long: Phosphonates import ATP-binding protein PhnC 3 (262 aa).

The 243-residue stretch at 3 to 245 (IQLECLSVTY…ELNRIYGNAE (243 aa)) folds into the ABC transporter domain. 36-43 (GASGSGKS) serves as a coordination point for ATP.

It belongs to the ABC transporter superfamily. Phosphonates importer (TC 3.A.1.9.1) family. In terms of assembly, the complex is composed of two ATP-binding proteins (PhnC), two transmembrane proteins (PhnE) and a solute-binding protein (PhnD).

The protein resides in the cell inner membrane. The catalysed reaction is phosphonate(out) + ATP + H2O = phosphonate(in) + ADP + phosphate + H(+). In terms of biological role, part of the ABC transporter complex PhnCDE involved in phosphonates import. Responsible for energy coupling to the transport system. The polypeptide is Phosphonates import ATP-binding protein PhnC 3 (Nostoc sp. (strain PCC 7120 / SAG 25.82 / UTEX 2576)).